Reading from the N-terminus, the 20-residue chain is Pregnancy-associated glycoprotein 55h (20 aa).

Residue Asn-4 is glycosylated (N-linked (GlcNAc...) asparagine).

This sequence belongs to the peptidase A1 family. In terms of tissue distribution, highly expressed in the placenta between day 60 and day 100 of gestation.

It localises to the secreted. The protein resides in the extracellular space. This chain is Pregnancy-associated glycoprotein 55h, found in Ovis aries (Sheep).